Reading from the N-terminus, the 940-residue chain is Alanine--tRNA ligase (940 aa).

4 residues coordinate Zn(2+): His581, His585, Cys683, and His687.

The protein belongs to the class-II aminoacyl-tRNA synthetase family. Requires Zn(2+) as cofactor.

Its subcellular location is the cytoplasm. It carries out the reaction tRNA(Ala) + L-alanine + ATP = L-alanyl-tRNA(Ala) + AMP + diphosphate. Its function is as follows. Catalyzes the attachment of alanine to tRNA(Ala) in a two-step reaction: alanine is first activated by ATP to form Ala-AMP and then transferred to the acceptor end of tRNA(Ala). Also edits incorrectly charged Ser-tRNA(Ala) and Gly-tRNA(Ala) via its editing domain. The protein is Alanine--tRNA ligase of Leptospira borgpetersenii serovar Hardjo-bovis (strain L550).